A 204-amino-acid chain; its full sequence is Guanylate kinase (204 aa).

Residues 3–181 enclose the Guanylate kinase-like domain; that stretch reads GTLYIVSAAS…AVSEMSAIFT (179 aa). 10-17 lines the ATP pocket; it reads AASGTGKS.

This sequence belongs to the guanylate kinase family.

It is found in the cytoplasm. It catalyses the reaction GMP + ATP = GDP + ADP. In terms of biological role, essential for recycling GMP and indirectly, cGMP. In Xylella fastidiosa (strain 9a5c), this protein is Guanylate kinase (gmk).